The primary structure comprises 142 residues: MSYTHILVAVAVTPESHQLLAKAVSIARPVQAKVSLITLASDPELYNQFAAPMMEDLRAVMHEETENFLKMLGEKADYPIEQTFIASGELSQHILAVCRKHHVDLVICGNHNHSFFSRASCSAKSVVSASQVDVLLVPLAGD.

Belongs to the universal stress protein A family.

The protein resides in the cytoplasm. In terms of biological role, required for resistance to DNA-damaging agents. The protein is Universal stress protein C (uspC) of Salmonella typhimurium (strain LT2 / SGSC1412 / ATCC 700720).